The chain runs to 147 residues: Large ribosomal subunit protein bL9 (147 aa).

Belongs to the bacterial ribosomal protein bL9 family.

In terms of biological role, binds to the 23S rRNA. The polypeptide is Large ribosomal subunit protein bL9 (Cytophaga hutchinsonii (strain ATCC 33406 / DSM 1761 / CIP 103989 / NBRC 15051 / NCIMB 9469 / D465)).